A 428-amino-acid chain; its full sequence is Kynureninase (428 aa).

Pyridoxal 5'-phosphate-binding positions include T104, T105, 132-135 (FPSD), D213, H216, and Y238. At K239 the chain carries N6-(pyridoxal phosphate)lysine. Residues W267 and T295 each coordinate pyridoxal 5'-phosphate.

It belongs to the kynureninase family. As to quaternary structure, homodimer. Requires pyridoxal 5'-phosphate as cofactor.

It catalyses the reaction L-kynurenine + H2O = anthranilate + L-alanine + H(+). It carries out the reaction 3-hydroxy-L-kynurenine + H2O = 3-hydroxyanthranilate + L-alanine + H(+). It participates in amino-acid degradation; L-kynurenine degradation; L-alanine and anthranilate from L-kynurenine: step 1/1. The protein operates within cofactor biosynthesis; NAD(+) biosynthesis; quinolinate from L-kynurenine: step 2/3. Catalyzes the cleavage of L-kynurenine (L-Kyn) and L-3-hydroxykynurenine (L-3OHKyn) into anthranilic acid (AA) and 3-hydroxyanthranilic acid (3-OHAA), respectively. The protein is Kynureninase of Bacillus cereus (strain ATCC 10987 / NRS 248).